The primary structure comprises 447 residues: Secretin receptor (447 aa).

An N-terminal signal peptide occupies residues 1-28 (MLSTMSPRLSLLLLWLLLLINAAHPVGA). The Extracellular portion of the chain corresponds to 29–140 (LPRLCDVRRV…NERRHAYLLK (112 aa)). 3 cysteine pairs are disulfide-bonded: Cys46-Cys74, Cys65-Cys106, and Cys88-Cys122. 4 N-linked (GlcNAc...) asparagine glycosylation sites follow: Asn71, Asn99, Asn105, and Asn127. Residues 141-166 (LKVMYTVGYSSSLAMLLVALSILCSF) form a helical membrane-spanning segment. Over 167 to 173 (RRLHCTR) the chain is Cytoplasmic. Residues 174–194 (NYIHMHLFVSFILRALSNFIK) traverse the membrane as a helical segment. Over 195–215 (DAVLFPADDVTYCDAHRAGCK) the chain is Extracellular. An intrachain disulfide couples Cys214 to Cys284. A helical transmembrane segment spans residues 216–238 (LVMIFFQYCIMANYAWLLVEGLY). Residues 239–253 (LHTLLAISFFSERKC) lie on the Cytoplasmic side of the membrane. A helical membrane pass occupies residues 254–275 (LQAFVLFGWGSPAIFVALWAVT). Residues 276 to 290 (RHFLEDFGCWDINSN) lie on the Extracellular side of the membrane. N-linked (GlcNAc...) asparagine glycosylation is present at Asn290. A helical membrane pass occupies residues 291 to 314 (ASIWWVIRGPVILSIVINFIFFIN). At 315–339 (ILRILMRKLRTQETRGNETHHYKRL) the chain is on the cytoplasmic side. Residues 340–355 (AKSTLLLIPLFGIHYI) traverse the membrane as a helical segment. Over 356–366 (VFAFSPEGAME) the chain is Extracellular. A helical transmembrane segment spans residues 367–390 (VQLFFELALGSFQGLVVAVLYCFL). Topologically, residues 391–447 (NGELEVQKKWRQWHLQEFPLRPVALSNSFSNATNGPTHSTKAGTSEQSRSIPGANVI) are cytoplasmic. Polar residues predominate over residues 423–440 (TNGPTHSTKAGTSEQSRS). The disordered stretch occupies residues 423–447 (TNGPTHSTKAGTSEQSRSIPGANVI).

The protein belongs to the G-protein coupled receptor 2 family. In terms of processing, phosphorylated on Ser and Thr residues at the cytoplasmic C-terminus by G protein-coupled receptor kinases (GRKs). As to expression, in brain, expressed in the hippocampal CA1 region, the lower layer of cerebral cortex, the anterior olfactory nuclei, the anterior ventrolateral thalamus, the lateral region of hypothalamus, substantia nigra, tegmental area and central nucleus of the inferior colliculus, the ventral supramamillary nucleus and the cerebellum. Expressed in brown adipocytes: expression predominates in mature brown adipocytes (at protein level). Detected in the renal medulla, where it localized predominantly on the basolateral membranes of cells in the collecting ducts (blue arrow) and the ascending thick segments of the loop of Henle.

The protein resides in the cell membrane. The protein localises to the basolateral cell membrane. G protein-coupled receptor activated by secretin (SCT), which is involved in different processes such as regulation of the pH of the duodenal content, food intake and water homeostasis. Ligand binding causes a conformation change that triggers signaling via guanine nucleotide-binding proteins (G proteins) and activates cAMP-dependent pathway. Upon binding to secretin, regulates the pH of the duodenum by (1) inhibiting the secretion of gastric acid from the parietal cells of the stomach and (2) stimulating the production of bicarbonate (NaHCO(3)) from the ductal cells of the pancreas. In addition to regulating the pH of the duodenal content, plays a central role in diet induced thermogenesis: acts as a non-sympathetic brown fat (BAT) activator mediating prandial thermogenesis, which consequentially induces satiation. Mechanistically, secretin released by the gut after a meal binds to secretin receptor (SCTR) in brown adipocytes, activating brown fat thermogenesis by stimulating lipolysis, which is sensed in the brain and promotes satiation. Also able to stimulate lipolysis in white adipocytes. Also plays an important role in cellular osmoregulation by regulating renal water reabsorption. Also plays a role in the central nervous system: required for synaptic plasticity. In Mus musculus (Mouse), this protein is Secretin receptor.